Reading from the N-terminus, the 183-residue chain is Ribosome-recycling factor (183 aa).

It belongs to the RRF family.

Its subcellular location is the cytoplasm. Functionally, responsible for the release of ribosomes from messenger RNA at the termination of protein biosynthesis. May increase the efficiency of translation by recycling ribosomes from one round of translation to another. In Ureaplasma parvum serovar 3 (strain ATCC 27815 / 27 / NCTC 11736), this protein is Ribosome-recycling factor.